A 301-amino-acid polypeptide reads, in one-letter code: uncharacterized protein (301 aa).

3 residues coordinate a divalent metal cation: E146, E148, and D177.

The protein belongs to the FAH family.

This is an uncharacterized protein from Staphylococcus saprophyticus subsp. saprophyticus (strain ATCC 15305 / DSM 20229 / NCIMB 8711 / NCTC 7292 / S-41).